Consider the following 307-residue polypeptide: Stage III sporulation protein AA (307 aa).

ATP is bound at residue 143–150 (GPPQTGKT).

This chain is Stage III sporulation protein AA (spoIIIAA), found in Bacillus subtilis (strain 168).